A 114-amino-acid polypeptide reads, in one-letter code: Ribosome-binding factor A (114 aa).

This sequence belongs to the RbfA family. Monomer. Binds 30S ribosomal subunits, but not 50S ribosomal subunits or 70S ribosomes.

It is found in the cytoplasm. Its function is as follows. One of several proteins that assist in the late maturation steps of the functional core of the 30S ribosomal subunit. Associates with free 30S ribosomal subunits (but not with 30S subunits that are part of 70S ribosomes or polysomes). Required for efficient processing of 16S rRNA. May interact with the 5'-terminal helix region of 16S rRNA. The chain is Ribosome-binding factor A from Listeria innocua serovar 6a (strain ATCC BAA-680 / CLIP 11262).